A 155-amino-acid chain; its full sequence is Acetylaranotin biosynthesis cluster protein L (155 aa).

It participates in mycotoxin biosynthesis. Functionally, nonribosomal peptide synthetase; part of the gene cluster that mediates the biosynthesis of acetylaranotin, a member of the epipolythiodioxopiperazine (ETP) class of toxins characterized by a disulfide-bridged cyclic dipeptide. The first step of acetylaranotin biosynthesis is performed by the NRPS ataP which produces diketopiperazine cyclo-L-Phe-L-Phe via the condensation of 2 phenylalanines (L-Phe). The ataC domain of ataTC then catalyzes the formation of bishydroxylation of cyclo-L-Phe-L-Phe. The glutathione S-transferase domain ataG in ataIMG further catalyzes the conjugation of two glutathiones to the bishydroxylated intermediate. Next, the dipeptidase ataJ removes the Glu residues. The following step is performed by the carbon sulfur lyase domain ataI of ataIMG which may convert the bis-cysteinyl adduct to yield an epidithiol intermediate. The ataT domain from ataTC then catalyzes the oxidation of the free dithiols, followed by a cyclization step catalyzed by the cytochrome P450 ataF. AtaF probably acts as an epoxidase to promote a dual epoxidation formation at C8 and C9 along with C8' and C9', followed by the spontaneous nucleophilic attack of the amide nitrogens N10 and N10' to yield an intermediate with the pyrrolidine partial structure. The final steps of acetylaranotin biosynthesis involve the acetylation and ring rearrangement of an epitetrathiodiketopiperazine intermediate to produce acetylaranotin. AtaH probably catalyzes the acetylation of epitetrathiodiketopiperazine to produce a diacetate and ataY is responsible for the formation of the dihydrooxepin moiety that converts the diacetate intermediate to acetylaranotin via acetylapoaranotin. Both enzymes could function independently in the absence of the other. The specific function of ataL within the pathway has still to be determined. The acetylaranotin bis-thiomethyltransferase ataS located outside of acetylaranotin gene cluster is the main thiomethyltransferase responsible for converting acetylaranotin and its related intermediates to their methylated forms. The sequence is that of Acetylaranotin biosynthesis cluster protein L from Aspergillus terreus (strain NIH 2624 / FGSC A1156).